A 77-amino-acid chain; its full sequence is Acyl carrier protein (77 aa).

A Carrier domain is found at 2–77 (ADVLERVTKI…DAVNYIKSRL (76 aa)). An O-(pantetheine 4'-phosphoryl)serine modification is found at Ser-37.

It belongs to the acyl carrier protein (ACP) family. Post-translationally, 4'-phosphopantetheine is transferred from CoA to a specific serine of apo-ACP by AcpS. This modification is essential for activity because fatty acids are bound in thioester linkage to the sulfhydryl of the prosthetic group.

The protein localises to the cytoplasm. Its pathway is lipid metabolism; fatty acid biosynthesis. In terms of biological role, carrier of the growing fatty acid chain in fatty acid biosynthesis. The protein is Acyl carrier protein of Geobacillus kaustophilus (strain HTA426).